The primary structure comprises 287 residues: 4-hydroxybenzoate octaprenyltransferase (287 aa).

Transmembrane regions (helical) follow at residues 41–61 (WPLL…GCAM), 89–109 (WEAV…ILPL), 133–153 (FFAI…PMAF), 158–178 (DTVP…SVAY), 202–224 (FGRF…YVWI), and 266–286 (HNNW…LLAG).

The protein belongs to the UbiA prenyltransferase family. Mg(2+) serves as cofactor.

It localises to the cell inner membrane. The enzyme catalyses all-trans-octaprenyl diphosphate + 4-hydroxybenzoate = 4-hydroxy-3-(all-trans-octaprenyl)benzoate + diphosphate. It functions in the pathway cofactor biosynthesis; ubiquinone biosynthesis. Catalyzes the prenylation of para-hydroxybenzoate (PHB) with an all-trans polyprenyl group. Mediates the second step in the final reaction sequence of ubiquinone-8 (UQ-8) biosynthesis, which is the condensation of the polyisoprenoid side chain with PHB, generating the first membrane-bound Q intermediate 3-octaprenyl-4-hydroxybenzoate. This is 4-hydroxybenzoate octaprenyltransferase from Burkholderia orbicola (strain MC0-3).